The sequence spans 488 residues: Probable glycine dehydrogenase (decarboxylating) subunit 2 (488 aa).

Lysine 264 is modified (N6-(pyridoxal phosphate)lysine).

It belongs to the GcvP family. C-terminal subunit subfamily. The glycine cleavage system is composed of four proteins: P, T, L and H. In this organism, the P 'protein' is a heterodimer of two subunits. Pyridoxal 5'-phosphate serves as cofactor.

It catalyses the reaction N(6)-[(R)-lipoyl]-L-lysyl-[glycine-cleavage complex H protein] + glycine + H(+) = N(6)-[(R)-S(8)-aminomethyldihydrolipoyl]-L-lysyl-[glycine-cleavage complex H protein] + CO2. Functionally, the glycine cleavage system catalyzes the degradation of glycine. The P protein binds the alpha-amino group of glycine through its pyridoxal phosphate cofactor; CO(2) is released and the remaining methylamine moiety is then transferred to the lipoamide cofactor of the H protein. This chain is Probable glycine dehydrogenase (decarboxylating) subunit 2, found in Methylococcus capsulatus (strain ATCC 33009 / NCIMB 11132 / Bath).